The following is a 132-amino-acid chain: MNIGEAAKKSGLTPKMIRYYESIELLRPAGRSASGYRHYNENDLHTLAFIRRSRDLGFSLDEVGKLLTLWQDRQRASADVKALAAQHVRELNRKIEELSTLRDTLQDLVEHCQGDHRPDCPILKDLASGCCH.

Residues 1–69 enclose the HTH merR-type domain; it reads MNIGEAAKKS…LDEVGKLLTL (69 aa). Positions 4–23 form a DNA-binding region, H-T-H motif; sequence GEAAKKSGLTPKMIRYYESI.

Its subcellular location is the cytoplasm. This is an uncharacterized protein from Pseudomonas aeruginosa (strain ATCC 15692 / DSM 22644 / CIP 104116 / JCM 14847 / LMG 12228 / 1C / PRS 101 / PAO1).